A 338-amino-acid polypeptide reads, in one-letter code: MKVFYDKDADLSLIKGKNVTIIGYGSQGHAHALNLKDSGVNVTVGLRKSGASWNKAVNAGLQVKEVAEAVKGADVVMILLPDEQIADVYKNEVHANIKEGAALAFAHGFNVHYGAVIPRADLDVIMIAPKAPGHTVRSTYAQGGGVPHLIAVHQNKSGAARDIALSYATANGGGRAGIIETNFREETETDLFGEQAVLCGGTVELIKAGFETLVEAGYAPEMAYFECLHELKLIVDLIYEGGIANMNYSISNNAEYGEYVTGPRVVTEETKKAMKQCLKDIQTGEYAKSFLLENKAGAPTLISRRRLTAEHQIEEVGGKLRAMMPWIAKNKLVDQSKN.

Residues 1–181 (MKVFYDKDAD…GGGRAGIIET (181 aa)) enclose the KARI N-terminal Rossmann domain. NADP(+) is bound by residues 24 to 27 (YGSQ), R47, and S52. H107 is a catalytic residue. G133 serves as a coordination point for NADP(+). Residues 182–327 (NFREETETDL…GKLRAMMPWI (146 aa)) enclose the KARI C-terminal knotted domain. Residues D190, E194, E226, and E230 each coordinate Mg(2+). Substrate is bound at residue S251.

The protein belongs to the ketol-acid reductoisomerase family. The cofactor is Mg(2+).

The enzyme catalyses (2R)-2,3-dihydroxy-3-methylbutanoate + NADP(+) = (2S)-2-acetolactate + NADPH + H(+). It catalyses the reaction (2R,3R)-2,3-dihydroxy-3-methylpentanoate + NADP(+) = (S)-2-ethyl-2-hydroxy-3-oxobutanoate + NADPH + H(+). The protein operates within amino-acid biosynthesis; L-isoleucine biosynthesis; L-isoleucine from 2-oxobutanoate: step 2/4. It functions in the pathway amino-acid biosynthesis; L-valine biosynthesis; L-valine from pyruvate: step 2/4. Functionally, involved in the biosynthesis of branched-chain amino acids (BCAA). Catalyzes an alkyl-migration followed by a ketol-acid reduction of (S)-2-acetolactate (S2AL) to yield (R)-2,3-dihydroxy-isovalerate. In the isomerase reaction, S2AL is rearranged via a Mg-dependent methyl migration to produce 3-hydroxy-3-methyl-2-ketobutyrate (HMKB). In the reductase reaction, this 2-ketoacid undergoes a metal-dependent reduction by NADPH to yield (R)-2,3-dihydroxy-isovalerate. This chain is Ketol-acid reductoisomerase (NADP(+)), found in Cupriavidus metallidurans (strain ATCC 43123 / DSM 2839 / NBRC 102507 / CH34) (Ralstonia metallidurans).